The chain runs to 355 residues: (R,S)-reticuline 7-O-methyltransferase (355 aa).

Residues 197–200 (VGGG), D221, 221–222 (DL), 241–242 (DM), and K255 contribute to the S-adenosyl-L-methionine site. Residue H259 is the Proton acceptor of the active site.

It belongs to the class I-like SAM-binding methyltransferase superfamily. Cation-independent O-methyltransferase family. Homodimer. Expressed in capsules, buds and stems, and at lower levels in leaves. Localized to parenchyma cells within the vascular bundle, but only to those cells distal to laticifers. In roots, found in the pericycle within the stele.

It catalyses the reaction (S)-reticuline + S-adenosyl-L-methionine = (S)-laudanine + S-adenosyl-L-homocysteine + H(+). The catalysed reaction is (R)-reticuline + S-adenosyl-L-methionine = (R)-laudanine + S-adenosyl-L-homocysteine + H(+). In terms of biological role, catalyzes the transfer of a methyl group to reticuline to form laudanine. Methylates the simple catechols guaiacol and isovanillic acid as well as the tetrahydrobenzylisoquinolines (R)-reticuline, (S)-reticuline, (R,S)-orientaline, (R)-protosinomenine and (R,S)-isoorientaline. Involved in the production of laudanine. The sequence is that of (R,S)-reticuline 7-O-methyltransferase from Papaver somniferum (Opium poppy).